Consider the following 707-residue polypeptide: MGEKQDPDKAYGKPAKYDPSFRGPIRNRSCTDIICCVLFFVFILGYIAVGLVAWVYGDPQQVLYPRNSSGAYCGIGENKDKPYLLYFNIFSCVLTTNIIAVAQNGLDCPTPQVCVSSCPAVSWTVATNQLSQTVGQVFYAANRSFCLPGVPGDMPVHQSLSQELCPSFLLPSSPALGRCFPWPNSTVPEVPEISNTSISQGISGLLDSLNARDISVKIFEDFAQSWYWILAALGVALVLSLLFVLLLRLVAGPLVFVLIIGVLGVLAYGIYHCWNEYRLLRDKGASISQLGFTTNLSAYSSVQETWLAALILLAVLEGILLLMLIFLRQRIRIAIALLEEASRAVGQMMSTLFYPLVTFVLLLVCIAYWAMTALYLATSGQPQYVLWAPNVSLAGCEKVMMNTSCDPMNQPVNSTCPGLMCVFQGYLSTGLVQRSLFNLQIYGVLGLFWTINWVLALGQCVLAGAFASFYWAFHKPRDIPTFPLSSAFIRTLRYHTGSLAFGALILTLVQIARAILEYIDHKLRGAQNPVARCIMCCFKCCLWCLEKFIKFLNRNAYIMIAIYGKNFCVSAKNAFMLLMRNIVRVVVLDKVTDLLLFFGKLLVVGGVGVLSFFFFTGRIQGLGKDFESPQLNYYWLPIMTSIMGAYVIASGFFSVFGMCVDTLFLCFLEDLERNDGSLDRPYYMSKALLKILGKKNEVPSGDKKRKK.

The Cytoplasmic segment spans residues 1–32 (MGEKQDPDKAYGKPAKYDPSFRGPIRNRSCTD). The helical transmembrane segment at 33–53 (IICCVLFFVFILGYIAVGLVA) threads the bilayer. Topologically, residues 54-226 (WVYGDPQQVL…KIFEDFAQSW (173 aa)) are extracellular. Residues N67, N142, N184, and N195 are each glycosylated (N-linked (GlcNAc...) asparagine). The chain crosses the membrane as a helical span at residues 227–247 (YWILAALGVALVLSLLFVLLL). Residues 248–249 (RL) are Cytoplasmic-facing. Residues 250–270 (VAGPLVFVLIIGVLGVLAYGI) form a helical membrane-spanning segment. The Extracellular portion of the chain corresponds to 271–306 (YHCWNEYRLLRDKGASISQLGFTTNLSAYSSVQETW). N-linked (GlcNAc...) asparagine glycosylation occurs at N295. A helical transmembrane segment spans residues 307 to 327 (LAALILLAVLEGILLLMLIFL). At 328–355 (RQRIRIAIALLEEASRAVGQMMSTLFYP) the chain is on the cytoplasmic side. The chain crosses the membrane as a helical span at residues 356–376 (LVTFVLLLVCIAYWAMTALYL). The Extracellular segment spans residues 377–452 (ATSGQPQYVL…GVLGLFWTIN (76 aa)). N-linked (GlcNAc...) asparagine glycosylation is found at N390, N402, and N413. The helical transmembrane segment at 453–473 (WVLALGQCVLAGAFASFYWAF) threads the bilayer. Residues 474–498 (HKPRDIPTFPLSSAFIRTLRYHTGS) are Cytoplasmic-facing. Residues 499–519 (LAFGALILTLVQIARAILEYI) traverse the membrane as a helical segment. Residues 520–557 (DHKLRGAQNPVARCIMCCFKCCLWCLEKFIKFLNRNAY) lie on the Extracellular side of the membrane. Residues 558–578 (IMIAIYGKNFCVSAKNAFMLL) traverse the membrane as a helical segment. At 579–594 (MRNIVRVVVLDKVTDL) the chain is on the cytoplasmic side. The helical transmembrane segment at 595-615 (LLFFGKLLVVGGVGVLSFFFF) threads the bilayer. At 616–635 (TGRIQGLGKDFESPQLNYYW) the chain is on the extracellular side. A helical transmembrane segment spans residues 636–656 (LPIMTSIMGAYVIASGFFSVF). Residues 657-707 (GMCVDTLFLCFLEDLERNDGSLDRPYYMSKALLKILGKKNEVPSGDKKRKK) are Cytoplasmic-facing.

This sequence belongs to the CTL (choline transporter-like) family. In terms of processing, N-glycosylated; N-glycosylation of Asn-677 and Asn-390 is required for a proper thiamine pyrophosphate uptake.

The protein localises to the membrane. The protein resides in the apical cell membrane. It carries out the reaction choline(out) + n H(+)(in) = choline(in) + n H(+)(out). The catalysed reaction is thiamine diphosphate(out) = thiamine diphosphate(in). Functionally, choline transporter that plays a role in the choline-acetylcholine system and is required to the efferent innervation of hair cells in the olivocochlear bundle for the maintenance of physiological function of outer hair cells and the protection of hair cells from acoustic injury. Also described as a thiamine pyrophosphate transporter in colon, may mediate the absorption of microbiota-generated thiamine pyrophosphate and contribute to host thiamine (vitamin B1) homeostasis. The chain is Choline transporter-like protein 4 from Sus scrofa (Pig).